Reading from the N-terminus, the 142-residue chain is Large ribosomal subunit protein bL21 (142 aa).

Basic residues predominate over residues 74–84 (RRRQNSKRTRG). A disordered region spans residues 74 to 142 (RRRQNSKRTR…KAATKAESAE (69 aa)). Positions 107–125 (KAAEKKAPKADAAEGEAAK) are enriched in basic and acidic residues. Basic residues predominate over residues 126–135 (PKKAAPKKAA).

It belongs to the bacterial ribosomal protein bL21 family. As to quaternary structure, part of the 50S ribosomal subunit. Contacts protein L20.

In terms of biological role, this protein binds to 23S rRNA in the presence of protein L20. In Brucella abortus (strain S19), this protein is Large ribosomal subunit protein bL21.